The primary structure comprises 1062 residues: Protein P1-P2 (1062 aa).

Residues 1–20 (MNRFTAYAALFFIFSLCSTA) form the signal peptide. Transmembrane regions (helical) follow at residues 121 to 141 (AASV…WTLA), 144 to 164 (ITLF…LGCI), and 172 to 192 (ALSL…KIIW). The Peptidase S39 domain maps to 207–399 (VEGYKGFSVP…GITSPNYVFE (193 aa)). Catalysis depends on for protease activity residues His255, Asp286, and Ser354. A disordered region spans residues 456–557 (TNAPAEKTAQ…AEAQTKQTRK (102 aa)). Residues 463–484 (TAQTNSAEKTAPSTSAEKTAPT) show a composition bias toward polar residues. Residues 497–511 (QNKRQLRHPRRRYKR) show a composition bias toward basic residues. Polar residues predominate over residues 541–553 (QGVSESPAEAQTK). In terms of domain architecture, RdRp catalytic spans 859–974 (EHTRPTDCSG…APNSDLEEYK (116 aa)).

Post-translationally, specific enzymatic cleavages in vivo yield mature proteins. The protease probably cleaves itself and releases the RdRp (Potential). Cleavages have been shown in the P1 protein, but since the N-terminus containing the serine protease is shared between P1 and P1-P2, cleavages should also occur within the P1-P2 protein.

Its subcellular location is the membrane. The enzyme catalyses RNA(n) + a ribonucleoside 5'-triphosphate = RNA(n+1) + diphosphate. In terms of biological role, precursor from which the RNA-dependent RNA polymerase (RdRp) is probably released. RNA-dependent RNA polymerase plays an essential role in virus replication (Potential). This is Protein P1-P2 from Solanum tuberosum (Potato).